A 396-amino-acid polypeptide reads, in one-letter code: Phosphopentomutase (396 aa).

Mn(2+)-binding residues include Asp-13, Asp-288, His-293, Asp-329, His-330, and His-341.

Belongs to the phosphopentomutase family. It depends on Mn(2+) as a cofactor.

The protein resides in the cytoplasm. The catalysed reaction is 2-deoxy-alpha-D-ribose 1-phosphate = 2-deoxy-D-ribose 5-phosphate. The enzyme catalyses alpha-D-ribose 1-phosphate = D-ribose 5-phosphate. The protein operates within carbohydrate degradation; 2-deoxy-D-ribose 1-phosphate degradation; D-glyceraldehyde 3-phosphate and acetaldehyde from 2-deoxy-alpha-D-ribose 1-phosphate: step 1/2. Functionally, isomerase that catalyzes the conversion of deoxy-ribose 1-phosphate (dRib-1-P) and ribose 1-phosphate (Rib-1-P) to deoxy-ribose 5-phosphate (dRib-5-P) and ribose 5-phosphate (Rib-5-P), respectively. This Clostridium perfringens (strain 13 / Type A) protein is Phosphopentomutase.